The primary structure comprises 535 residues: Probable galacturonosyltransferase 12 (535 aa).

Over 1–37 (MQLHISPSLRHVTVVTGKGLREFIKVKVGSRRFSYQM) the chain is Cytoplasmic. Residues 38 to 58 (VFYSLLFFTFLLRFVFVLSTV) form a helical; Signal-anchor for type II membrane protein membrane-spanning segment. At 59 to 535 (DTIDGDPSPC…FIKSCHIRAS (477 aa)) the chain is on the lumenal side. Asparagine 397 and asparagine 430 each carry an N-linked (GlcNAc...) asparagine glycan.

It belongs to the glycosyltransferase 8 family. As to expression, highly expressed in stems. Detected in roots, inflorescences, siliques, and leaves. Expressed in cells undergoing secondary wall thickening, including interfascicular fibers and primary and secondary xylem.

It localises to the golgi apparatus membrane. It functions in the pathway glycan metabolism; pectin biosynthesis. Its function is as follows. Involved in pectin assembly and/or distribution, and in the synthesis of secondary wall glucuronoxylan. Probably involved in the synthesis of the glycosyl sequence at the glucuronoxylan reducing end. May be involved in synthesis of a complex glycan primer for xylan synthesis. In Arabidopsis thaliana (Mouse-ear cress), this protein is Probable galacturonosyltransferase 12 (GAUT12).